Consider the following 330-residue polypeptide: Fructose-1,6-bisphosphatase class 1 (330 aa).

Residues Glu-84, Asp-103, Leu-105, and Asp-106 each contribute to the Mg(2+) site. Residues 106 to 109 (DGSS), Asn-196, and Lys-262 contribute to the substrate site. A Mg(2+)-binding site is contributed by Glu-268.

Belongs to the FBPase class 1 family. Homotetramer. Mg(2+) is required as a cofactor.

The protein localises to the cytoplasm. It carries out the reaction beta-D-fructose 1,6-bisphosphate + H2O = beta-D-fructose 6-phosphate + phosphate. It functions in the pathway carbohydrate biosynthesis; gluconeogenesis. The polypeptide is Fructose-1,6-bisphosphatase class 1 (Shewanella sp. (strain ANA-3)).